The sequence spans 703 residues: Probable boron transporter 2 (703 aa).

At 1–35 (MEETFVPFEGIKNDLKGRLMCYKQDWTGGIKAGFR) the chain is on the cytoplasmic side. A helical membrane pass occupies residues 36-56 (ILAPTTYIFFASAIPVISFGE). Residues 57–75 (QLERSTDGVLTAVQTLAST) lie on the Extracellular side of the membrane. The helical transmembrane segment at 76–96 (AICGIIHSIIGGQPLLILGVA) threads the bilayer. The Cytoplasmic portion of the chain corresponds to 97–120 (EPTVIMYTFMFNFAKGRPELGRNL). Residues 121-141 (FLAWSGWVCVWTSLILFVLAI) form a helical membrane-spanning segment. Topologically, residues 142 to 155 (CGACSFINRFTRVA) are extracellular. The helical transmembrane segment at 156 to 176 (GELFGLLIAMLFMQQAIKGLV) threads the bilayer. At 177–195 (DEFRAPAREDLKLVEFLPS) the chain is on the cytoplasmic side. The helical transmembrane segment at 196–216 (WRFANGMFALVLSFGLLITAL) threads the bilayer. The Extracellular segment spans residues 217–233 (RSRKARSWRYGTGWLRS). The chain crosses the membrane as a helical span at residues 234–254 (LVADYGVPLMVLVWTGVSYIP). Over 255–289 (TGDVPKGIPRRLFSPNPWSPGAYENWTVVKEMLQV) the chain is Cytoplasmic. Residues 290–310 (PIVYIIGAFIPATMIAVLYYF) form a helical membrane-spanning segment. The Extracellular portion of the chain corresponds to 311–337 (DHSVASQLAQQKEFNLRKPSSYHYDLL). Residues 338–358 (LLGFLTLMCGLLGIPPSNGVI) traverse the membrane as a helical segment. The Cytoplasmic segment spans residues 359–480 (PQSPMHTKSL…AVMVGGCVAA (122 aa)). A helical transmembrane segment spans residues 481 to 501 (MPLLKMIPTSVLWGYFAFMAI). Residues 502 to 557 (ESLPGNQFWERILLLFTAPSRRFKVLEDNHATFVETVPFKTIAMFTIFQTTYLLTC) are Extracellular-facing. The chain crosses the membrane as a helical span at residues 558–578 (FGLTWIPIAGVMFPLLIMFLI). The Cytoplasmic segment spans residues 579 to 703 (PVRQYILPRF…SPLNPSSSSK (125 aa)). The segment at 678 to 703 (EMSPRLSGKGQNSPKPSPLNPSSSSK) is disordered.

This sequence belongs to the anion exchanger (TC 2.A.31.3) family.

It is found in the membrane. Probable boron transporter. Boron is essential for maintaining the integrity of plants cell walls. This Arabidopsis thaliana (Mouse-ear cress) protein is Probable boron transporter 2 (BOR2).